A 134-amino-acid chain; its full sequence is Profilin-4 (134 aa).

Cysteine 13 and cysteine 118 form a disulfide bridge. The Involved in PIP2 interaction motif lies at 84 to 100 (AVIRGKKGSGGITIKKT). Threonine 114 is subject to Phosphothreonine.

Belongs to the profilin family. In terms of assembly, occurs in many kinds of cells as a complex with monomeric actin in a 1:1 ratio. In terms of processing, phosphorylated by MAP kinases.

Its subcellular location is the cytoplasm. It is found in the cytoskeleton. Functionally, binds to actin and affects the structure of the cytoskeleton. At high concentrations, profilin prevents the polymerization of actin, whereas it enhances it at low concentrations. In Olea europaea (Common olive), this protein is Profilin-4.